We begin with the raw amino-acid sequence, 308 residues long: Glutamyl-Q tRNA(Asp) synthetase (308 aa).

L-glutamate is bound by residues 19 to 23 and Glu55; that span reads RFAPS. Positions 22–32 match the 'HIGH' region motif; the sequence is PSPSGELHFGS. Residues Cys111, Cys113, Tyr125, and Cys129 each coordinate Zn(2+). The L-glutamate site is built by Tyr182 and Arg200. The 'KMSKS' region motif lies at 238–242; that stretch reads KLSKQ. Lys241 serves as a coordination point for ATP.

Belongs to the class-I aminoacyl-tRNA synthetase family. GluQ subfamily. The cofactor is Zn(2+).

Functionally, catalyzes the tRNA-independent activation of glutamate in presence of ATP and the subsequent transfer of glutamate onto a tRNA(Asp). Glutamate is transferred on the 2-amino-5-(4,5-dihydroxy-2-cyclopenten-1-yl) moiety of the queuosine in the wobble position of the QUC anticodon. The protein is Glutamyl-Q tRNA(Asp) synthetase of Escherichia coli O6:H1 (strain CFT073 / ATCC 700928 / UPEC).